A 749-amino-acid polypeptide reads, in one-letter code: Signal transducer and activator of transcription 4 (749 aa).

An SH2 domain is found at 570–665 (WIDGYIMGFV…ENPLKYLYPD (96 aa)). An N6-acetyllysine modification is found at Lys-668. Tyr-694 carries the phosphotyrosine; by JAK modification. Residue Ser-722 is modified to Phosphoserine.

This sequence belongs to the transcription factor STAT family. Forms a homodimer or a heterodimer with a related family member. Interacts with ARL2BP. Interacts with STAT1. Interacts with JUN; this complex efficiently interacts with the AP-1-related sequence of the IFN-gamma promoter. Acetylation at Lys-668 is required for JAK2-mediated phosphorylation and activation of STAT4. In terms of processing, tyrosine phosphorylated upon IL12 and IFN-alpha activation, but not by IFN-gamma in T-lymphocytes and NK cells. Serine phosphorylation is required for maximal transcriptional activity but not for DNA binding. Phosphorylation by MAP2K6 at Ser-722 is required for full transcriptional activity induced by IL12. However this serine phosphorylation is not required for cell proliferation although critical for IFN-gamma production. In terms of tissue distribution, expression is restricted to testis, thymus, and spleen.

The protein localises to the cytoplasm. The protein resides in the nucleus. Its function is as follows. Transcriptional regulator mainly expressed in hematopoietic cells that plays a critical role in cellular growth, differentiation and immune response. Plays a key role in the differentiation of T-helper 1 cells and the production of interferon-gamma. Also participates in multiple neutrophil functions including chemotaxis and production of the neutrophil extracellular traps. After IL12 binding to its receptor IL12RB2, STAT4 interacts with the intracellular domain of IL12RB2 and becomes tyrosine phosphorylated. Phosphorylated STAT4 then homodimerizes and migrates to the nucleus where it can recognize STAT target sequences present in IL12 responsive genes. Although IL12 appears to be the predominant activating signal, STAT4 can also be phosphorylated and activated in response to IFN-gamma stimulation via JAK1 and TYK2 and in response to different interleukins including IL23, IL2 and IL35. Transcription activation of IFN-gamma gene is mediated by interaction with JUN that forms a complex that efficiently interacts with the AP-1-related sequence of the IFN-gamma promoter. In response to IFN-alpha/beta signaling, acts as a transcriptional repressor and suppresses IL5 and IL13 mRNA expression during response to T-cell receptor (TCR) activation. This is Signal transducer and activator of transcription 4 (Stat4) from Mus musculus (Mouse).